A 472-amino-acid polypeptide reads, in one-letter code: Threonine synthase-like 2 (472 aa).

The residue at position 113 (Lys113) is an N6-(pyridoxal phosphate)lysine.

It belongs to the threonine synthase family. Pyridoxal 5'-phosphate is required as a cofactor.

Functionally, acts as a catabolic phospho-lyase on both gamma- and beta-phosphorylated substrates. Degrades O-phospho-threonine (PThr) to alpha-ketobutyrate, ammonia and phosphate. This is Threonine synthase-like 2 (thnsl2) from Xenopus laevis (African clawed frog).